The following is a 718-amino-acid chain: Probable glycerol-3-phosphate acyltransferase, mitochondrial (718 aa).

The HXXXXD motif motif lies at 167–172; it reads HRSHLD. The chain crosses the membrane as a helical span at residues 409–425; the sequence is MMCSISPVAVVSCLLLA.

Belongs to the GPAT/DAPAT family.

It is found in the mitochondrion membrane. The enzyme catalyses sn-glycerol 3-phosphate + an acyl-CoA = a 1-acyl-sn-glycero-3-phosphate + CoA. It functions in the pathway phospholipid metabolism; CDP-diacylglycerol biosynthesis; CDP-diacylglycerol from sn-glycerol 3-phosphate: step 1/3. The sequence is that of Probable glycerol-3-phosphate acyltransferase, mitochondrial (acl-6) from Caenorhabditis elegans.